A 360-amino-acid polypeptide reads, in one-letter code: MDRLFFLDHSPIDFYFKQSPETFVVEEVPLYPFSGAGEHLIVKVRKKNMTTWQMLQSISEQVGVKIRDIGYAGLKDKNALTYQYISLHKKYEEALKKFSHPLIKTIELTYHKNKIRRGHLKGNRFFIRLKKVKPVDAKKIDEVLKILEEEGMPNFFGYQRFGIDGDNWQLGKEIVEGKRKERNKTLKKLLINAYQSHLFNLWLSKRIELSKLLNCFTQNELSQTLDLPRSIIKELQCQKPFFKLFPGDIAMHYPNGKIFGVEDVKGESERFFAKAIAPTGLLPGVKTKRCDGLARDIEKDYDDERISEFGDRRYAWIFPQELHGIYKEKNAWYELSFFLPKGSYATVLLEEIAHRKIKGE.

Asp76 (nucleophile) is an active-site residue. The TRUD domain occupies 151–332; that stretch reads GMPNFFGYQR…HGIYKEKNAW (182 aa).

The protein belongs to the pseudouridine synthase TruD family.

The catalysed reaction is uridine(13) in tRNA = pseudouridine(13) in tRNA. Its function is as follows. Responsible for synthesis of pseudouridine from uracil-13 in transfer RNAs. The chain is tRNA pseudouridine synthase D from Nitratiruptor sp. (strain SB155-2).